Reading from the N-terminus, the 308-residue chain is Ribosomal protein L11 methyltransferase (308 aa).

The S-adenosyl-L-methionine site is built by T157, G178, D200, and N243.

It belongs to the methyltransferase superfamily. PrmA family.

The protein localises to the cytoplasm. It catalyses the reaction L-lysyl-[protein] + 3 S-adenosyl-L-methionine = N(6),N(6),N(6)-trimethyl-L-lysyl-[protein] + 3 S-adenosyl-L-homocysteine + 3 H(+). Methylates ribosomal protein L11. This Pelotomaculum thermopropionicum (strain DSM 13744 / JCM 10971 / SI) protein is Ribosomal protein L11 methyltransferase.